Here is a 427-residue protein sequence, read N- to C-terminus: UPF0229 protein YeaH (427 aa).

The tract at residues 84–110 (QSDRIERPQGGGGGSGSGQGQASQDGE) is disordered. A compositionally biased stretch (gly residues) spans 92–102 (QGGGGGSGSGQ).

Belongs to the UPF0229 family.

This chain is UPF0229 protein YeaH, found in Escherichia fergusonii (strain ATCC 35469 / DSM 13698 / CCUG 18766 / IAM 14443 / JCM 21226 / LMG 7866 / NBRC 102419 / NCTC 12128 / CDC 0568-73).